Consider the following 469-residue polypeptide: UDP-N-acetylmuramate--L-alanine ligase (469 aa).

Position 112–118 (112–118 (GTHGKTT)) interacts with ATP.

It belongs to the MurCDEF family.

The protein localises to the cytoplasm. The catalysed reaction is UDP-N-acetyl-alpha-D-muramate + L-alanine + ATP = UDP-N-acetyl-alpha-D-muramoyl-L-alanine + ADP + phosphate + H(+). Its pathway is cell wall biogenesis; peptidoglycan biosynthesis. Functionally, cell wall formation. The chain is UDP-N-acetylmuramate--L-alanine ligase from Herminiimonas arsenicoxydans.